The chain runs to 318 residues: MRNGAHRCESAMPGVTMTVLGCGKLGTAIIQGLLRSCPKASEAAPQKYLYPISTVIAAVRSKDRLESLIKSLVAEINDHTCPLDFVIANNVEAVRRADVVFLACHPNQATECLGGIGMQDAISGKLVISVLGGVSVATLEQAVYSSTRRPASGQAPCHIVQAIANTAAARQQSVTVVAEEETANSHEKGSLCEDVLRRLGQVSYVSPDLMPAVTALCASGTAFFTTYLDAMIQGAVSEGLGEDVATRLAALTMAGAANAVISGEHPAAVTSRVTTPGGVTAEGLKVLREGDLRTLTAKAISATTRRLRLVDEKSRKQS.

Belongs to the pyrroline-5-carboxylate reductase family.

It functions in the pathway mycotoxin biosynthesis. Functionally, pyrroline-5-carboxylate reductase; part of the gene cluster that mediates the biosynthesis of UCS1025A, a member of the pyrrolizidinone family that acts as a strong telomerase inhibitor and displays potent antibacterial and antitumor properties. These compounds share a hemiaminal-containing pyrrolizidinone core fused with a gamma-lactone, giving a furopyrrolizidine that is connected to a decalin fragment. The polyketide synthase module (PKS) of the PKS-NRPS ucsA is responsible for the synthesis of the polyketide backbone via the condensation of an acetyl-CoA starter unit with 6 malonyl-CoA units. The downstream nonribosomal peptide synthetase (NRPS) module then amidates the carboxyl end of the polyketide with a 2S,3S-methylproline derived from L-isoleucine by the 2-oxoglutarate-dependent dioxygenase ucsF which converts L-isoleucine to (4S,5S)-4-methylpyrroline-5-carboxylate that is further converted to 2S,3S-methylproline by the pyrroline-5-carboxylate reductase ucsG. Reductive release of the completed aminoacyl polyketide from the assembly line can form the 3-pyrrolin-2-one structure via an intramolecular Knoevenagel reaction. Because ucsA lacks a designated enoylreductase (ER) domain, the required activity is provided the enoyl reductase ucsL. This keto acyclic precursor is the substrate of the Diels-Alderase ucsH, that catalyzes the Diels-Alder cycloaddition. Oxidation of the 3S-methyl group to a carboxylate by the cytochrome P450 monooxygenase ucsK allows an oxa-Michael cyclization that might involve the reductase/dehydrogenase ucsI and which furnishes the furopyrrolizidine. The oxidase ucsJ likely plays a critical role in stereoselective reduction of the C5-C6 double bond to afford the required R-configured carboxylate group. Further enolization and oxidation at C5 by an unidentified enzyme affords the last intermediate that can undergo oxa-Michael cyclization to yield UCS1025A. The protein is Pyrroline-5-carboxylate reductase ucsG of Acremonium sp.